We begin with the raw amino-acid sequence, 136 residues long: uncharacterized protein (136 aa).

The helical transmembrane segment at Phe-102–Val-118 threads the bilayer.

The protein resides in the membrane. This is an uncharacterized protein from Saccharomyces cerevisiae (strain ATCC 204508 / S288c) (Baker's yeast).